Here is a 604-residue protein sequence, read N- to C-terminus: MCGIVGVVGNTNATDILIQGLEKLEYRGYDSAGIFVVGDNKSQLVKSVGRIAELQAKVGDSVSGTTGIGHTRWATHGKPTEGNAHPHTSGSGRFVLVHNGVIENYLQIKETYLTKHNLKGETDTEIAIHLVEHFVEEDNLSVLEAFKKALHIIEGSYAFALIDSQDADTIYVAKNKSPLLIGLGNGYNMVCSDAMAMIRETSEYMEIHDKELVIVKKDSVEVQDYDGNVIERGSYTAELDLSDIGKGTYPFYMLKEIDEQPTVMRKLISTYANESGDMNVDSDIIKSVQEADRLYILAAGTSYHAGFAAKTMIEKLTDTPVELGVSSEWGYNMPLLSKKPMFILLSQSGETADSRQVLVKANEMGIPSLTITNVPGSTLSREATYTMLIHAGPEIAVASTKAYTAQVATLAFLAKAVGEANGKAEAKDFDLVHELSIVAQSIEATLSEKDVISEKVEQLLISTRNAFYIGRGNDYYVTMEAALKLKEISYIQTEGFAAGELKHGTISLIEDNTPVIALISADSTIAAHTRGNIQEVVSRGANALIIVEEGLEREGDDIIVNKVHPFLSAISMVIPTQLIAYYASLQRGLDVDKPRNLAKAVTVE.

The active-site Nucleophile; for GATase activity is the Cys2. Residues 2-218 (CGIVGVVGNT…DKELVIVKKD (217 aa)) enclose the Glutamine amidotransferase type-2 domain. SIS domains lie at 284–423 (IIKS…ANGK) and 456–594 (VEQL…VDKP). The active-site For Fru-6P isomerization activity is the Lys599.

Homodimer.

The protein localises to the cytoplasm. The enzyme catalyses D-fructose 6-phosphate + L-glutamine = D-glucosamine 6-phosphate + L-glutamate. Catalyzes the first step in hexosamine metabolism, converting fructose-6P into glucosamine-6P using glutamine as a nitrogen source. The polypeptide is Glutamine--fructose-6-phosphate aminotransferase [isomerizing] (Streptococcus agalactiae serotype III (strain NEM316)).